A 336-amino-acid chain; its full sequence is GTPase Obg (336 aa).

An Obg domain is found at 1 to 159; it reads MKFVDEATLI…KTLKLELKLL (159 aa). One can recognise an OBG-type G domain in the interval 160–329; sequence ADVGLVGLPN…LIEAIFAQLR (170 aa). GTP contacts are provided by residues 166-173, 191-195, 213-216, 283-286, and 310-312; these read GLPNAGKS, FTTLA, DIPG, NKMD, and SAI. Residues Ser173 and Thr193 each contribute to the Mg(2+) site.

Belongs to the TRAFAC class OBG-HflX-like GTPase superfamily. OBG GTPase family. As to quaternary structure, monomer. Mg(2+) is required as a cofactor.

It localises to the cytoplasm. In terms of biological role, an essential GTPase which binds GTP, GDP and possibly (p)ppGpp with moderate affinity, with high nucleotide exchange rates and a fairly low GTP hydrolysis rate. Plays a role in control of the cell cycle, stress response, ribosome biogenesis and in those bacteria that undergo differentiation, in morphogenesis control. The chain is GTPase Obg from Desulfatibacillum aliphaticivorans.